Consider the following 326-residue polypeptide: tRNA-modifying protein YgfZ (326 aa).

2 residues coordinate folate: tryptophan 27 and tryptophan 189.

The protein belongs to the tRNA-modifying YgfZ family.

The protein resides in the cytoplasm. Folate-binding protein involved in regulating the level of ATP-DnaA and in the modification of some tRNAs. It is probably a key factor in regulatory networks that act via tRNA modification, such as initiation of chromosomal replication. In Escherichia coli O6:K15:H31 (strain 536 / UPEC), this protein is tRNA-modifying protein YgfZ.